The following is a 176-amino-acid chain: Glutathione-regulated potassium-efflux system ancillary protein KefF (176 aa).

Residues His-8, 14-17 (SHAN), 65-68 (MQWY), and 105-108 (TTGG) each bind FMN.

Belongs to the NAD(P)H dehydrogenase (quinone) family. KefF subfamily. Homodimer. Interacts with KefC. The cofactor is FMN.

The protein resides in the cell inner membrane. The catalysed reaction is a quinone + NADH + H(+) = a quinol + NAD(+). It catalyses the reaction a quinone + NADPH + H(+) = a quinol + NADP(+). In terms of biological role, regulatory subunit of a potassium efflux system that confers protection against electrophiles. Required for full activity of KefC. Shows redox enzymatic activity, but this enzymatic activity is not required for activation of KefC. The chain is Glutathione-regulated potassium-efflux system ancillary protein KefF from Salmonella gallinarum (strain 287/91 / NCTC 13346).